A 226-amino-acid polypeptide reads, in one-letter code: MNIREWPVEERPREKLLNRGAGSLSDAELLAVFLGSGVKGRNVLELARGLLVKFGGLRQVLEADRQAFLGELGLGPVRYSQLQALLEIGRRNLAMSIERESVMDNPLAVRRYLKAMLRHEASEVFGCLFLDTKHRPLAFEILFRGTIDRASIYPREVVRRALLHNAAALILCHNHPSGNCEPSQDDVHLTLMLKRSLALIDVRVVDHVIVGDGEPLSMIEHGWLAG.

In terms of domain architecture, MPN spans 102–224; sequence VMDNPLAVRR…PLSMIEHGWL (123 aa). Zn(2+) is bound by residues H173, H175, and D186. Positions 173–186 match the JAMM motif motif; sequence HNHPSGNCEPSQDD.

This sequence belongs to the UPF0758 family.

In Pseudomonas entomophila (strain L48), this protein is UPF0758 protein PSEEN5431.